Consider the following 202-residue polypeptide: Cilia- and flagella-associated protein 418 (202 aa).

The tract at residues 71 to 90 (DVDTPTSTHEPSPAKASSSA) is disordered. Polar residues predominate over residues 74–90 (TPTSTHEPSPAKASSSA).

Ubiquitously expressed during early development and in adult tissues including the eye, brain, heart and kidney.

Its subcellular location is the cytoplasm. The protein localises to the photoreceptor inner segment. Functionally, may be involved in photoreceptor outer segment disk morphogenesis. In Danio rerio (Zebrafish), this protein is Cilia- and flagella-associated protein 418 (cfap418).